We begin with the raw amino-acid sequence, 160 residues long: Nucleotide-binding protein VC_1508 (160 aa).

This sequence belongs to the YajQ family.

Functionally, nucleotide-binding protein. The polypeptide is Nucleotide-binding protein VC_1508 (Vibrio cholerae serotype O1 (strain ATCC 39315 / El Tor Inaba N16961)).